Here is a 1288-residue protein sequence, read N- to C-terminus: Mitogen-activated protein kinase kinase kinase 6 (1288 aa).

Residues 648–906 (TGERLVLGKG…AQTLLGDPFL (259 aa)) enclose the Protein kinase domain. Residues 654–662 (LGKGTYGVV) and K677 each bind ATP. D771 functions as the Proton acceptor in the catalytic mechanism. At T806 the chain carries Phosphothreonine. The segment at 899–997 (TLLGDPFLQP…SSGLSLLHQE (99 aa)) is disordered. Low complexity predominate over residues 914–952 (SPSSPRHAPRPSDAPSASPTPSANSTTQSQTFPCPQAPS). Phosphoserine occurs at positions 964 and 984. The span at 980-989 (EEPASPEESS) shows a compositional bias: low complexity. Residues 1004–1029 (LAAVLEQELPALAENLHQEQKQEQGA) adopt a coiled-coil conformation. Over residues 1123–1134 (VEKEAVSPRSEE) the composition is skewed to basic and acidic residues. The interval 1123–1157 (VEKEAVSPRSEELSNEGDSQQSPGQQSPLPVEPEQ) is disordered. Phosphoserine occurs at positions 1129 and 1149. Over residues 1141–1151 (SQQSPGQQSPL) the composition is skewed to low complexity. Residues 1166 to 1205 (LSLLRAETDRLREILAGKEREYQALVQRALQRLNEEARTY) are a coiled coil.

It belongs to the protein kinase superfamily. STE Ser/Thr protein kinase family. MAP kinase kinase kinase subfamily. Binds both upstream activators and downstream substrates in multimolecular complexes. Mg(2+) serves as cofactor.

The enzyme catalyses L-seryl-[protein] + ATP = O-phospho-L-seryl-[protein] + ADP + H(+). It catalyses the reaction L-threonyl-[protein] + ATP = O-phospho-L-threonyl-[protein] + ADP + H(+). Activated by phosphorylation on Thr-806. Catalytically active only when complexed with MAP3K5, with MAP3K5 supporting the stability and the active configuration of MAP3K6 and MAP3K6 activating MAP3K5 by direct phosphorylation. Its function is as follows. Component of a protein kinase signal transduction cascade. Activates the JNK, but not ERK or p38 kinase pathways. The chain is Mitogen-activated protein kinase kinase kinase 6 (MAP3K6) from Homo sapiens (Human).